Reading from the N-terminus, the 288-residue chain is Oxaloacetate decarboxylase (288 aa).

Residue Ser47 participates in substrate binding. Residue Asp85 coordinates Mg(2+). The substrate site is built by Arg156 and His232.

This sequence belongs to the isocitrate lyase/PEP mutase superfamily. Oxaloacetate decarboxylase family. As to quaternary structure, homotetramer; dimer of dimers. Requires Mg(2+) as cofactor.

It carries out the reaction oxaloacetate + H(+) = pyruvate + CO2. Catalyzes the decarboxylation of oxaloacetate into pyruvate. Seems to play a role in maintaining cellular concentrations of bicarbonate and pyruvate. This chain is Oxaloacetate decarboxylase, found in Bradyrhizobium sp. (strain ORS 278).